We begin with the raw amino-acid sequence, 124 residues long: Acidic phospholipase A2 A (124 aa).

Cystine bridges form between cysteine 26/cysteine 116, cysteine 28/cysteine 44, cysteine 43/cysteine 95, cysteine 49/cysteine 124, cysteine 50/cysteine 88, cysteine 57/cysteine 81, and cysteine 75/cysteine 86. Tyrosine 27, glycine 29, and glycine 31 together coordinate Ca(2+). The active site involves histidine 47. Position 48 (aspartate 48) interacts with Ca(2+). Aspartate 89 is an active-site residue.

This sequence belongs to the phospholipase A2 family. Group II subfamily. D49 sub-subfamily. The cofactor is Ca(2+). Expressed by the venom gland.

The protein resides in the secreted. The enzyme catalyses a 1,2-diacyl-sn-glycero-3-phosphocholine + H2O = a 1-acyl-sn-glycero-3-phosphocholine + a fatty acid + H(+). Functionally, PLA2 catalyzes the calcium-dependent hydrolysis of the 2-acyl groups in 3-sn-phosphoglycerides. This Gloydius halys (Chinese water mocassin) protein is Acidic phospholipase A2 A.